Here is an 808-residue protein sequence, read N- to C-terminus: Probable inorganic carbon transporter subunit DabA (808 aa).

Positions 334, 336, 494, and 509 each coordinate Zn(2+).

It belongs to the inorganic carbon transporter (TC 9.A.2) DabA family. Forms a complex with DabB. Zn(2+) serves as cofactor.

The protein resides in the cell inner membrane. In terms of biological role, part of an energy-coupled inorganic carbon pump. This is Probable inorganic carbon transporter subunit DabA from Rhodopseudomonas palustris (strain BisB5).